The sequence spans 81 residues: Sulfur carrier protein TusA (81 aa).

Cys19 functions as the Cysteine persulfide intermediate in the catalytic mechanism.

The protein belongs to the sulfur carrier protein TusA family.

It is found in the cytoplasm. Sulfur carrier protein which probably makes part of a sulfur-relay system. This Shewanella woodyi (strain ATCC 51908 / MS32) protein is Sulfur carrier protein TusA.